Consider the following 124-residue polypeptide: Small ribosomal subunit protein uS12 (124 aa).

Aspartate 89 bears the 3-methylthioaspartic acid mark. The interval 102 to 124 (LDTSGVNNRKHGRSKYGTKRPKS) is disordered. Basic residues predominate over residues 109 to 124 (NRKHGRSKYGTKRPKS).

This sequence belongs to the universal ribosomal protein uS12 family. As to quaternary structure, part of the 30S ribosomal subunit. Contacts proteins S8 and S17. May interact with IF1 in the 30S initiation complex.

Functionally, with S4 and S5 plays an important role in translational accuracy. Interacts with and stabilizes bases of the 16S rRNA that are involved in tRNA selection in the A site and with the mRNA backbone. Located at the interface of the 30S and 50S subunits, it traverses the body of the 30S subunit contacting proteins on the other side and probably holding the rRNA structure together. The combined cluster of proteins S8, S12 and S17 appears to hold together the shoulder and platform of the 30S subunit. The polypeptide is Small ribosomal subunit protein uS12 (Francisella tularensis subsp. tularensis (strain FSC 198)).